Reading from the N-terminus, the 404-residue chain is S-adenosylmethionine synthase (404 aa).

Residue 139–144 (GKGSTD) participates in ATP binding.

It belongs to the AdoMet synthase 2 family. Requires Mg(2+) as cofactor.

The catalysed reaction is L-methionine + ATP + H2O = S-adenosyl-L-methionine + phosphate + diphosphate. It participates in amino-acid biosynthesis; S-adenosyl-L-methionine biosynthesis; S-adenosyl-L-methionine from L-methionine: step 1/1. Its function is as follows. Catalyzes the formation of S-adenosylmethionine from methionine and ATP. The protein is S-adenosylmethionine synthase of Saccharolobus islandicus (strain L.S.2.15 / Lassen #1) (Sulfolobus islandicus).